A 381-amino-acid polypeptide reads, in one-letter code: Endophilin-A homolog (381 aa).

The segment at 1–21 (MSLSGLRKQFNKANQYLSETM) is membrane-binding amphipathic helix. In terms of domain architecture, BAR spans 18–247 (SETMGAAEPT…LGHRIKDAAA (230 aa)). Residues 170–238 (CKKRQQRRDD…QCLENLQQQL (69 aa)) adopt a coiled-coil conformation. Positions 246 to 323 (AARPREEHVP…PPPLSQQQKP (78 aa)) are disordered. A compositionally biased stretch (polar residues) spans 260–271 (ANESRTPRSSFR). The span at 305 to 317 (YQGPPPGGLPPPL) shows a compositional bias: pro residues. The SH3 domain occupies 320 to 379 (QQKPQCRALFDFDAQSEGELDFKEGTLIELVSQIDENWYEGRVNGKTGLFPVTYVQVLVP).

This sequence belongs to the endophilin family. May form a homodimer (via the BAR domain). In terms of tissue distribution, expressed in neurons and posterior intestine.

It localises to the synapse. Its subcellular location is the cytoplasmic vesicle. The protein localises to the secretory vesicle. It is found in the synaptic vesicle. The protein resides in the membrane. Involved in synaptic vesicle (SV) recycling in neurons probably by regulating clathrin-mediated endocytosis. By controlling SV endocytosis, regulates the rate of excitatory postsynaptic currents (EPSCs) at neuromuscular junctions and thus locomotion. In a similar manner, involved in necrotic neuronal cell death induced by abnormal hyperactivation of ion channels. Plays a minor role in responses to mechanical stimuli. Plays a minor role in unc-26/synaptojanin localization to synapses. The polypeptide is Endophilin-A homolog (Caenorhabditis elegans).